The following is a 514-amino-acid chain: Transcription termination factor Rho (514 aa).

The interval 25-52 (EPSSTPGPARNARRSNRRMRHPDKDVDK) is disordered. Residues 35-45 (NARRSNRRMRH) are compositionally biased toward basic residues. The Rho RNA-BD domain occupies 141–216 (LMYGEGTLEI…LRIEAINHAD (76 aa)). Residues 259–264 (GFGQRG), 271–276 (RAGKTM), and R302 contribute to the ATP site.

This sequence belongs to the Rho family. Homohexamer. The homohexamer assembles into an open ring structure.

In terms of biological role, facilitates transcription termination by a mechanism that involves Rho binding to the nascent RNA, activation of Rho's RNA-dependent ATPase activity, and release of the mRNA from the DNA template. The protein is Transcription termination factor Rho of Rhodopirellula baltica (strain DSM 10527 / NCIMB 13988 / SH1).